The sequence spans 411 residues: ATP-dependent RNA helicase eIF4A (411 aa).

Residues 1–23 (MSKPEDTSAAAAAPAGEAGNNLN) form a disordered region. The span at 9-19 (AAAAAPAGEAG) shows a compositional bias: low complexity. Residues 38–66 (DNFDNMELKEELLRGVYAYGFERPSAIQA) carry the Q motif motif. Residues 69–239 (IVPVIKGHDV…KKFMRDPIRI (171 aa)) enclose the Helicase ATP-binding domain. 82–89 (AQSGTGKT) provides a ligand contact to ATP. Residues 187–190 (DEAD) carry the DEAD box motif. The 162-residue stretch at 250–411 (GIKQFYVAVE…EMPLNVADLI (162 aa)) folds into the Helicase C-terminal domain.

Belongs to the DEAD box helicase family. eIF4A subfamily. In terms of assembly, component of the eIF4F complex, which composition varies with external and internal environmental conditions. It is composed of at least eIF4A, eIF4E and eIF4G.

The protein localises to the cytoplasm. The catalysed reaction is ATP + H2O = ADP + phosphate + H(+). Its function is as follows. ATP-dependent RNA helicase which is a subunit of the eIF4F complex involved in cap recognition and is required for mRNA binding to ribosome. In the current model of translation initiation, eIF4A unwinds RNA secondary structures in the 5'-UTR of mRNAs which is necessary to allow efficient binding of the small ribosomal subunit, and subsequent scanning for the initiator codon. The sequence is that of ATP-dependent RNA helicase eIF4A (TIF1) from Mycosarcoma maydis (Corn smut fungus).